The sequence spans 324 residues: Glucokinase (324 aa).

6-11 (IDIGGT) lines the ATP pocket.

This sequence belongs to the bacterial glucokinase family.

The protein localises to the cytoplasm. The catalysed reaction is D-glucose + ATP = D-glucose 6-phosphate + ADP + H(+). The polypeptide is Glucokinase (Zymomonas mobilis subsp. mobilis (strain ATCC 31821 / ZM4 / CP4)).